Reading from the N-terminus, the 899-residue chain is AP-3 complex subunit delta (899 aa).

HEAT repeat units follow at residues 37 to 74 (QSPEQLHEFLTRVLSECREEVKHADFNMKTNAVLKLTY), 155 to 192 (ELARDICEDLFLMLHSTKPYIRKKAVTALFKVFLQYPE), 194 to 229 (LRDNFEKFVDRLEDDDLSVVSATVSVICELSKHNPQ), 231 to 267 (FIQLSPILYQMLIKVDNNWVIIRLLKLFTNLAQIEPK), 268 to 305 (LRVKILPNVLELMDSTTAISVVYESINCIVKGNMLNSD), 308 to 344 (DSAVACLDKLHDFCTSNDPNLRYLSCVLFYKIGKINT), 345 to 382 (DFIANFDVLILRLLVDVDVSIRSKTLELLEGIVTEDNL), 384 to 428 (DFVQ…ITAM), 480 to 518 (RTLAQIVQLVKSEDITARLPGVLKECIWCLGEYSSLLDN), 536 to 580 (ELQQ…LIIS), 590 to 613 (SEALEFLRLCLDSLSEDASDSLPL), and 614 to 656 (LLTE…TESE). 4 disordered regions span residues 668 to 701 (DGIVSPDVSDTESDSEMYVPGAAPKDKGSSPTHE), 741 to 768 (NLSNSKPSSSGSLVRLSSESKAKEKKKK), 782 to 801 (GVNTADVTDDRPSNTPSARN), and 849 to 899 (AAEE…LTTE). The segment covering 743–759 (SNSKPSSSGSLVRLSSE) has biased composition (low complexity). The stretch at 841–862 (QRLLDESAAAEEEVVVVKKKKR) forms a coiled coil. Positions 857-880 (VKKKKRSKDGSKSSKKKSRSKSKP) are enriched in basic residues.

The protein belongs to the adaptor complexes large subunit family. Adaptor protein complex 3 (AP-3) is a heterotetramer composed of 2 large adaptins (APL5 and APL6), a medium adaptin (APM3) and a small adaptin (APS3).

It localises to the golgi apparatus. The protein localises to the cytoplasmic vesicle. It is found in the clathrin-coated vesicle membrane. Part of the AP-3 complex, an adaptor-related complex which is not clathrin-associated. The complex is associated with the Golgi region as well as more peripheral structures. It facilitates the budding of vesicles from the Golgi membrane and may be directly involved in trafficking to the vacuole. This chain is AP-3 complex subunit delta (APL5), found in Eremothecium gossypii (strain ATCC 10895 / CBS 109.51 / FGSC 9923 / NRRL Y-1056) (Yeast).